Reading from the N-terminus, the 146-residue chain is Large ribosomal subunit protein uL13 (146 aa).

It belongs to the universal ribosomal protein uL13 family. In terms of assembly, part of the 50S ribosomal subunit.

In terms of biological role, this protein is one of the early assembly proteins of the 50S ribosomal subunit, although it is not seen to bind rRNA by itself. It is important during the early stages of 50S assembly. The sequence is that of Large ribosomal subunit protein uL13 from Sulfurisphaera tokodaii (strain DSM 16993 / JCM 10545 / NBRC 100140 / 7) (Sulfolobus tokodaii).